The sequence spans 183 residues: uncharacterized protein (183 aa).

Belongs to the chlamydial CPn_0803/CT_584/TC_0873 family.

This is an uncharacterized protein from Chlamydia muridarum (strain MoPn / Nigg).